We begin with the raw amino-acid sequence, 191 residues long: Glycerol-3-phosphate acyltransferase (191 aa).

Transmembrane regions (helical) follow at residues 10-30 (LAFIIFVYVIAAIPFGRCISA), 57-77 (FGSVVFMLDFLKAAAPVFLAV), 84-104 (FASTVGFVAVFAHVFSVYMAF), 118-138 (FVLVLPVFIVAVCTWGIFFVL), and 158-178 (YALLELYVFLPILAGTVLIFI).

This sequence belongs to the PlsY family. Probably interacts with PlsX.

It is found in the cell inner membrane. It carries out the reaction an acyl phosphate + sn-glycerol 3-phosphate = a 1-acyl-sn-glycero-3-phosphate + phosphate. It functions in the pathway lipid metabolism; phospholipid metabolism. Functionally, catalyzes the transfer of an acyl group from acyl-phosphate (acyl-PO(4)) to glycerol-3-phosphate (G3P) to form lysophosphatidic acid (LPA). This enzyme utilizes acyl-phosphate as fatty acyl donor, but not acyl-CoA or acyl-ACP. The polypeptide is Glycerol-3-phosphate acyltransferase (Neorickettsia sennetsu (strain ATCC VR-367 / Miyayama) (Ehrlichia sennetsu)).